The chain runs to 198 residues: Putative 3-methyladenine DNA glycosylase (198 aa).

It belongs to the DNA glycosylase MPG family.

The protein is Putative 3-methyladenine DNA glycosylase of Rhizobium johnstonii (strain DSM 114642 / LMG 32736 / 3841) (Rhizobium leguminosarum bv. viciae).